We begin with the raw amino-acid sequence, 412 residues long: Adipocyte plasma membrane-associated protein (412 aa).

The tract at residues 1–32 (MTEADGLRQRRPLRPQVVTDDNRTPEAKGGSS) is disordered. Topologically, residues 1 to 39 (MTEADGLRQRRPLRPQVVTDDNRTPEAKGGSSFSGRVFR) are cytoplasmic. Residue Thr-19 is modified to Phosphothreonine. Residues 40–60 (ATFLMLAAFLTIPLLGALVLL) form a helical membrane-spanning segment. The Extracellular segment spans residues 61–412 (DSPIDPEPLS…RAPYLCRLRL (352 aa)). Residue Asn-159 is glycosylated (N-linked (GlcNAc...) asparagine).

This sequence belongs to the strictosidine synthase family.

The protein resides in the membrane. In terms of biological role, exhibits strong arylesterase activity with beta-naphthyl acetate and phenyl acetate. May play a role in adipocyte differentiation. The protein is Adipocyte plasma membrane-associated protein (APMAP) of Bos taurus (Bovine).